A 451-amino-acid chain; its full sequence is Speckle-type POZ protein homolog (451 aa).

The tract at residues 51–75 (EVVSSGSGNSAHGRSISPSPSSASH) is disordered. Over residues 60 to 75 (SAHGRSISPSPSSASH) the composition is skewed to low complexity. One can recognise an MATH domain in the interval 95 to 225 (KFNYMWTINN…GDRLSIFCEV (131 aa)). Positions 265–338 (SDFTLVCKSD…MYTGQTKYIE (74 aa)) constitute a BTB domain.

The protein belongs to the Tdpoz family.

Its subcellular location is the nucleus. It localises to the nucleus speckle. It functions in the pathway protein modification; protein ubiquitination. Functionally, mediates ubiquitination and proteasomal degradation of target proteins, most likely in complex with cul-3. May promote the degradation of bromodomain-containing proteins such as bet-1. The protein is Speckle-type POZ protein homolog of Caenorhabditis elegans.